The chain runs to 86 residues: Large ribosomal subunit protein eL43 (86 aa).

The segment at 38–60 (CPFCGHKGKVYRLSTGVWACKKC) adopts a C4-type zinc-finger fold.

It belongs to the eukaryotic ribosomal protein eL43 family. The cofactor is Zn(2+).

This chain is Large ribosomal subunit protein eL43, found in Desulfurococcus amylolyticus (strain DSM 18924 / JCM 16383 / VKM B-2413 / 1221n) (Desulfurococcus kamchatkensis).